A 271-amino-acid polypeptide reads, in one-letter code: NH(3)-dependent NAD(+) synthetase (271 aa).

43-50 (GISGGQDS) contacts ATP. Asp49 is a Mg(2+) binding site. Arg137 is a deamido-NAD(+) binding site. Position 157 (Thr157) interacts with ATP. Glu162 provides a ligand contact to Mg(2+). Residues Lys170 and Asp177 each contribute to the deamido-NAD(+) site. 2 residues coordinate ATP: Lys186 and Thr208. Deamido-NAD(+) is bound at residue 257–258 (HK).

The protein belongs to the NAD synthetase family. In terms of assembly, homodimer.

The catalysed reaction is deamido-NAD(+) + NH4(+) + ATP = AMP + diphosphate + NAD(+) + H(+). The protein operates within cofactor biosynthesis; NAD(+) biosynthesis; NAD(+) from deamido-NAD(+) (ammonia route): step 1/1. Catalyzes the ATP-dependent amidation of deamido-NAD to form NAD. Uses ammonia as a nitrogen source. In Exiguobacterium sp. (strain ATCC BAA-1283 / AT1b), this protein is NH(3)-dependent NAD(+) synthetase.